Here is a 100-residue protein sequence, read N- to C-terminus: RNA-binding protein YlxQ (100 aa).

Belongs to the eukaryotic ribosomal protein eL8 family.

In terms of biological role, RNA-binding protein that recognizes the K-turn motif present in ribosomal RNA, but also in box C/D and box C'/D' sRNAs. The polypeptide is RNA-binding protein YlxQ (Bacillus subtilis (strain 168)).